A 485-amino-acid polypeptide reads, in one-letter code: Noelin (485 aa).

The N-terminal stretch at 1–16 (MSVPLLKIGVVLSTMA) is a signal peptide. N-linked (GlcNAc...) asparagine glycans are attached at residues Asn33, Asn103, Asn187, Asn288, Asn307, Asn394, Asn431, and Asn473. Residues 87–227 (RDARTKQLRQ…LRACMQKLAC (141 aa)) adopt a coiled-coil conformation. Positions 226-478 (ACGKLTGISD…QTLYNVTLFH (253 aa)) constitute an Olfactomedin-like domain. Cysteines 227 and 409 form a disulfide. The short motif at 482–485 (SDEL) is the Endoplasmic reticulum retention signal element.

In terms of assembly, homotetramer; disulfide-linked. Dimer of dimers, giving rise to a V-shaped homotretramer. Isoform 1 and isoform 3 interact with RTN4R. Identified in a complex with RTN4R and LINGO1. Peripherally associated with AMPAR complex. AMPAR complex consists of an inner core made of 4 pore-forming GluA/GRIA proteins (GRIA1, GRIA2, GRIA3 and GRIA4) and 4 major auxiliary subunits arranged in a twofold symmetry. One of the two pairs of distinct binding sites is occupied either by CNIH2, CNIH3 or CACNG2, CACNG3. The other harbors CACNG2, CACNG3, CACNG4, CACNG8 or GSG1L. This inner core of AMPAR complex is complemented by outer core constituents binding directly to the GluA/GRIA proteins at sites distinct from the interaction sites of the inner core constituents. Outer core constituents include at least PRRT1, PRRT2, CKAMP44/SHISA9, FRRS1L and NRN1. The proteins of the inner and outer core serve as a platform for other, more peripherally associated AMPAR constituents, including OLFM1. Alone or in combination, these auxiliary subunits control the gating and pharmacology of the AMPAR complex and profoundly impact their biogenesis and protein processing. Interacts with OLFM2. Interacts with DTNB. In terms of tissue distribution, expressed in the brain cortex, olfactory bulb and vomeronasal neuroepithelium (at protein level). Detected in brain cortex, hippocampus, dorsal root ganglion and olfactory bulb.

It localises to the secreted. Its subcellular location is the synapse. The protein resides in the endoplasmic reticulum. It is found in the cell projection. The protein localises to the axon. It localises to the perikaryon. Functionally, contributes to the regulation of axonal growth in the embryonic and adult central nervous system by inhibiting interactions between RTN4R and LINGO1. Inhibits RTN4R-mediated axon growth cone collapse. May play an important role in regulating the production of neural crest cells by the neural tube. May be required for normal responses to olfactory stimuli. This Mus musculus (Mouse) protein is Noelin (Olfm1).